Here is a 164-residue protein sequence, read N- to C-terminus: Protein phosphatase 1 regulatory subunit 14C (164 aa).

A compositionally biased stretch (gly residues) spans 1-19; that stretch reads MSVVTGGGEAAGGTSGGGA. The segment at 1 to 72 is disordered; the sequence is MSVVTGGGEA…QRRHQQGKVT (72 aa). Serine 2 carries the N-acetylserine modification. Residue serine 25 is modified to Phosphoserine. Residue arginine 27 is modified to Omega-N-methylarginine. The residue at position 33 (serine 33) is a Phosphoserine. Residues 50–62 are compositionally biased toward low complexity; it reads VATVAAAGQVQQQ. Threonine 72 carries the post-translational modification Phosphothreonine; by ILK1.

It belongs to the PP1 inhibitor family. Post-translationally, has over 600-fold higher inhibitory activity when phosphorylated, creating a molecular switch for regulating the phosphorylation status of PPP1CA substrates and smooth muscle contraction. The main inhibitory site appears to be Thr-72.

It is found in the endomembrane system. Its function is as follows. Inhibitor of the PP1 regulatory subunit PPP1CA. The chain is Protein phosphatase 1 regulatory subunit 14C (Ppp1r14c) from Rattus norvegicus (Rat).